A 513-amino-acid polypeptide reads, in one-letter code: Maturase K (513 aa).

Belongs to the intron maturase 2 family. MatK subfamily.

Its subcellular location is the plastid. The protein resides in the chloroplast. Functionally, usually encoded in the trnK tRNA gene intron. Probably assists in splicing its own and other chloroplast group II introns. In Phragmites australis (Common reed), this protein is Maturase K.